Here is a 222-residue protein sequence, read N- to C-terminus: Uracil-DNA glycosylase (222 aa).

D61 serves as the catalytic Proton acceptor.

Belongs to the uracil-DNA glycosylase (UDG) superfamily. UNG family.

The protein localises to the cytoplasm. It catalyses the reaction Hydrolyzes single-stranded DNA or mismatched double-stranded DNA and polynucleotides, releasing free uracil.. Functionally, excises uracil residues from the DNA which can arise as a result of misincorporation of dUMP residues by DNA polymerase or due to deamination of cytosine. This chain is Uracil-DNA glycosylase, found in Aeromonas salmonicida (strain A449).